Reading from the N-terminus, the 485-residue chain is UDP-N-acetylmuramate--L-alanine ligase (485 aa).

125–131 is a binding site for ATP; sequence GTHGKTT.

It belongs to the MurCDEF family.

It is found in the cytoplasm. It catalyses the reaction UDP-N-acetyl-alpha-D-muramate + L-alanine + ATP = UDP-N-acetyl-alpha-D-muramoyl-L-alanine + ADP + phosphate + H(+). Its pathway is cell wall biogenesis; peptidoglycan biosynthesis. In terms of biological role, cell wall formation. The polypeptide is UDP-N-acetylmuramate--L-alanine ligase (Stutzerimonas stutzeri (strain A1501) (Pseudomonas stutzeri)).